Here is a 348-residue protein sequence, read N- to C-terminus: NADH-ubiquinone oxidoreductase chain 2 (348 aa).

The next 11 helical transmembrane spans lie at 3 to 23 (PYVL…TFAS), 25 to 45 (HWLL…RLMA), 60 to 80 (FLTQ…NAWA), 99 to 119 (MMAL…PEVL), 122 to 142 (LDLT…FALI), 150 to 170 (NPML…WGGL), 178 to 196 (ILAY…ILQY), 200 to 219 (LTLI…FLSL), 246 to 266 (LTLL…KWLI), 274 to 294 (DLPA…YFYL), and 328 to 348 (LMMI…ALFF).

This sequence belongs to the complex I subunit 2 family.

It localises to the mitochondrion inner membrane. It carries out the reaction a ubiquinone + NADH + 5 H(+)(in) = a ubiquinol + NAD(+) + 4 H(+)(out). In terms of biological role, core subunit of the mitochondrial membrane respiratory chain NADH dehydrogenase (Complex I) that is believed to belong to the minimal assembly required for catalysis. Complex I functions in the transfer of electrons from NADH to the respiratory chain. The immediate electron acceptor for the enzyme is believed to be ubiquinone. The sequence is that of NADH-ubiquinone oxidoreductase chain 2 (MT-ND2) from Formosania lacustris (Oriental stream loach).